The following is a 56-amino-acid chain: Ovomucoid (56 aa).

A Kazal-like domain is found at 6–56; the sequence is VDCSEYPKPACTLEYVPICGSDNKTYGNKCNFCNAVVESNGTLTLSHFGKC. Cystine bridges form between cysteine 8/cysteine 38, cysteine 16/cysteine 35, and cysteine 24/cysteine 56. N-linked (GlcNAc...) asparagine glycosylation is present at asparagine 45.

It localises to the secreted. This is Ovomucoid from Cyrtonyx montezumae (Montezuma quail).